We begin with the raw amino-acid sequence, 557 residues long: Glucose-6-phosphate isomerase (557 aa).

The active-site Proton donor is the glutamate 359. Residues histidine 390 and lysine 518 contribute to the active site.

Belongs to the GPI family.

The protein resides in the cytoplasm. It carries out the reaction alpha-D-glucose 6-phosphate = beta-D-fructose 6-phosphate. The protein operates within carbohydrate biosynthesis; gluconeogenesis. It functions in the pathway carbohydrate degradation; glycolysis; D-glyceraldehyde 3-phosphate and glycerone phosphate from D-glucose: step 2/4. In terms of biological role, catalyzes the reversible isomerization of glucose-6-phosphate to fructose-6-phosphate. The polypeptide is Glucose-6-phosphate isomerase (Hahella chejuensis (strain KCTC 2396)).